The chain runs to 944 residues: Leucine--tRNA ligase 2 (944 aa).

The 'HIGH' region signature appears at 36–46 (PYPNSPWHIGH). A 'KMSKS' region motif is present at residues 623 to 627 (KMSKS). Position 626 (K626) interacts with ATP.

Belongs to the class-I aminoacyl-tRNA synthetase family.

Its subcellular location is the cytoplasm. It catalyses the reaction tRNA(Leu) + L-leucine + ATP = L-leucyl-tRNA(Leu) + AMP + diphosphate. In Saccharolobus solfataricus (strain ATCC 35092 / DSM 1617 / JCM 11322 / P2) (Sulfolobus solfataricus), this protein is Leucine--tRNA ligase 2.